The chain runs to 65 residues: Alpha-conotoxin BnIA (65 aa).

Residues 1-21 form the signal peptide; that stretch reads MGMRMMFTMFLLVVLATTVVS. Positions 22–48 are excised as a propeptide; the sequence is FASDRASDGRNAAAKDKASDLVALTVK. Disulfide bonds link Cys-50–Cys-56 and Cys-51–Cys-64. A ser-Xaa-Pro motif, crucial for potent interaction with nAChR region spans residues 52–54; sequence SHP. Cysteine amide is present on Cys-64.

It belongs to the conotoxin A superfamily. Expressed by the venom duct.

The protein resides in the secreted. In terms of biological role, alpha-conotoxins act on postsynaptic membranes, they bind to the nicotinic acetylcholine receptors (nAChR) and thus inhibit them. This toxin inhibits acetylcholine-evoked currents reversibly in oocytes expressing the human alpha-7/CHRNA7 nAChR, and blocks nerve-evoked skeletal muscle contractions in isolated mouse neuromuscular preparations, but with a very low affinity. The polypeptide is Alpha-conotoxin BnIA (Conus bandanus (Banded marble cone)).